A 192-amino-acid chain; its full sequence is Peptidyl-tRNA hydrolase (192 aa).

His17 contacts tRNA. The active-site Proton acceptor is His22. TRNA is bound by residues Phe68, Asn70, and Asn116.

This sequence belongs to the PTH family. In terms of assembly, monomer.

The protein resides in the cytoplasm. The enzyme catalyses an N-acyl-L-alpha-aminoacyl-tRNA + H2O = an N-acyl-L-amino acid + a tRNA + H(+). Functionally, hydrolyzes ribosome-free peptidyl-tRNAs (with 1 or more amino acids incorporated), which drop off the ribosome during protein synthesis, or as a result of ribosome stalling. Its function is as follows. Catalyzes the release of premature peptidyl moieties from peptidyl-tRNA molecules trapped in stalled 50S ribosomal subunits, and thus maintains levels of free tRNAs and 50S ribosomes. The chain is Peptidyl-tRNA hydrolase from Stenotrophomonas maltophilia (strain R551-3).